The sequence spans 693 residues: Protein-glutamine gamma-glutamyltransferase E (693 aa).

A Phosphotyrosine modification is found at tyrosine 111. Phosphothreonine is present on threonine 112. Alanine 222, asparagine 225, asparagine 227, aspartate 228, and asparagine 230 together coordinate Ca(2+). Cysteine 273 is a catalytic residue. Aspartate 302, aspartate 304, asparagine 306, serine 308, and aspartate 325 together coordinate Ca(2+). Active-site residues include histidine 331 and aspartate 354. Ca(2+)-binding residues include asparagine 394, threonine 416, glutamate 444, and glutamate 449. The interval 457-483 (LDKLKPNASFGATSSRNPEGEDKEPSI) is disordered.

Belongs to the transglutaminase superfamily. Transglutaminase family. In terms of assembly, consists of two polypeptide chains, which are synthesized as a precursor form of a single polypeptide. Ca(2+) is required as a cofactor. In terms of processing, activated by proteolytic processing. In vitro activation is commonly achieved by cleavage with dispase, a neutral bacterial protease. Physiological activation may be catalyzed by CTSL and, to a lesser extent, by CTSS. In terms of tissue distribution, expressed in skin and stomach and, at lower levels, in testis, kidney and spleen (at protein level). On the basis of its catalytic activity, detected in the epidermis, around the granular and spinous layers but not in the outermost cornified layers. In hair follicles, mainly located in the medulla and the hair cortex.

Its subcellular location is the cytoplasm. It catalyses the reaction L-glutaminyl-[protein] + L-lysyl-[protein] = [protein]-L-lysyl-N(6)-5-L-glutamyl-[protein] + NH4(+). Functionally, catalyzes the calcium-dependent formation of isopeptide cross-links between glutamine and lysine residues in various proteins, as well as the conjugation of polyamines to proteins. Involved in the formation of the cornified envelope (CE), a specialized component consisting of covalent cross-links of proteins beneath the plasma membrane of terminally differentiated keratinocytes. Catalyzes small proline-rich proteins (SPRR1 and SPRR2) and LOR cross-linking to form small interchain oligomers, which are further cross-linked by TGM1 onto the growing CE scaffold. In hair follicles, involved in cross-linking structural proteins to hardening the inner root sheath. In Mus musculus (Mouse), this protein is Protein-glutamine gamma-glutamyltransferase E (Tgm3).